We begin with the raw amino-acid sequence, 226 residues long: ATP synthase subunit a (226 aa).

The next 6 helical transmembrane spans lie at 17–37, 79–99, 105–125, 134–154, 176–196, and 199–219; these read FSYFFHIGLVALIAVIVAMMA, LVATLGIIVFFSNIIGIIPGF, SLNLTLSLAIIVFVYYHFEGI, FAHFMGPIKLLAPLMFPIEIV, LFLMVILALVPYIAPLPAYVL, and FMAFLQAFIFMILTYVYLAGA.

Belongs to the ATPase A chain family. As to quaternary structure, F-type ATPases have 2 components, CF(1) - the catalytic core - and CF(0) - the membrane proton channel. CF(1) has five subunits: alpha(3), beta(3), gamma(1), delta(1), epsilon(1). CF(0) has three main subunits: a(1), b(2) and c(9-12). The alpha and beta chains form an alternating ring which encloses part of the gamma chain. CF(1) is attached to CF(0) by a central stalk formed by the gamma and epsilon chains, while a peripheral stalk is formed by the delta and b chains.

Its subcellular location is the cell inner membrane. Key component of the proton channel; it plays a direct role in the translocation of protons across the membrane. This Campylobacter jejuni subsp. jejuni serotype O:6 (strain 81116 / NCTC 11828) protein is ATP synthase subunit a.